A 222-amino-acid polypeptide reads, in one-letter code: Prolactin-2C5 (222 aa).

A signal peptide spans 1–29; that stretch reads MLPSLIQPCSWILLLLLVNSSLLWKNVAS. Cys33 and Cys40 form a disulfide bridge. Asn57 carries N-linked (GlcNAc...) asparagine glycosylation. Intrachain disulfides connect Cys87–Cys197 and Cys214–Cys222.

Belongs to the somatotropin/prolactin family. In terms of processing, N-glycosylated and sialylated. Expressed in placenta (at protein level). Expressed in the tail hair follicle, with highest expression detected in the keratinocytes of the outer root sheath. Expressed in ear skin with lesser amounts in small intestine. Not detected in brain at 18 dpc, postnatal day 25 or postnatal day 55.

The protein resides in the secreted. The protein is Prolactin-2C5 of Mus musculus (Mouse).